The chain runs to 621 residues: 5-aminolevulinate synthase, mitochondrial (621 aa).

Residues 76-95 (DAKGSLAGRPVHHKAATEST) form a disordered region. Substrate is bound by residues Arg-122 and Ser-234. Pyridoxal 5'-phosphate is bound by residues Ser-286, His-314, and Thr-359. Lys-362 is an active-site residue. Residue Lys-362 is modified to N6-(pyridoxal phosphate)lysine. Pyridoxal 5'-phosphate contacts are provided by Thr-391 and Thr-392. Thr-477 contacts substrate.

It belongs to the class-II pyridoxal-phosphate-dependent aminotransferase family. As to quaternary structure, homodimer. It depends on pyridoxal 5'-phosphate as a cofactor.

It localises to the mitochondrion matrix. It carries out the reaction succinyl-CoA + glycine + H(+) = 5-aminolevulinate + CO2 + CoA. Its pathway is porphyrin-containing compound metabolism; protoporphyrin-IX biosynthesis; 5-aminolevulinate from glycine: step 1/1. Catalyzes the synthesis of 5-aminolevulinate (ALA) from succinyl-CoA and glycine, the first and rate-limiting step in heme biosynthesis. This chain is 5-aminolevulinate synthase, mitochondrial (hem1), found in Agaricus bisporus (White button mushroom).